The sequence spans 255 residues: Ditrans,polycis-undecaprenyl-diphosphate synthase ((2E,6E)-farnesyl-diphosphate specific) (255 aa).

The active site involves Asp21. Asp21 serves as a coordination point for Mg(2+). Substrate-binding positions include 22–25, Trp26, Arg34, His38, and 66–68; these read GNGR and SSE. Asn69 (proton acceptor) is an active-site residue. Substrate is bound by residues Trp70, Arg72, Arg189, and 195–197; that span reads RIS. Glu208 is a Mg(2+) binding site.

This sequence belongs to the UPP synthase family. As to quaternary structure, homodimer. It depends on Mg(2+) as a cofactor.

The catalysed reaction is 8 isopentenyl diphosphate + (2E,6E)-farnesyl diphosphate = di-trans,octa-cis-undecaprenyl diphosphate + 8 diphosphate. Catalyzes the sequential condensation of isopentenyl diphosphate (IPP) with (2E,6E)-farnesyl diphosphate (E,E-FPP) to yield (2Z,6Z,10Z,14Z,18Z,22Z,26Z,30Z,34E,38E)-undecaprenyl diphosphate (di-trans,octa-cis-UPP). UPP is the precursor of glycosyl carrier lipid in the biosynthesis of bacterial cell wall polysaccharide components such as peptidoglycan and lipopolysaccharide. The sequence is that of Ditrans,polycis-undecaprenyl-diphosphate synthase ((2E,6E)-farnesyl-diphosphate specific) from Xylella fastidiosa (strain 9a5c).